The following is a 172-amino-acid chain: Shikimate kinase (172 aa).

Residue 12–17 participates in ATP binding; sequence GSGKTS. Position 16 (T16) interacts with Mg(2+). 3 residues coordinate substrate: D34, R58, and G81. An ATP-binding site is contributed by R122. Position 139 (R139) interacts with substrate.

Belongs to the shikimate kinase family. As to quaternary structure, monomer. It depends on Mg(2+) as a cofactor.

The protein resides in the cytoplasm. The enzyme catalyses shikimate + ATP = 3-phosphoshikimate + ADP + H(+). Its pathway is metabolic intermediate biosynthesis; chorismate biosynthesis; chorismate from D-erythrose 4-phosphate and phosphoenolpyruvate: step 5/7. Catalyzes the specific phosphorylation of the 3-hydroxyl group of shikimic acid using ATP as a cosubstrate. The polypeptide is Shikimate kinase (Dictyoglomus turgidum (strain DSM 6724 / Z-1310)).